A 95-amino-acid polypeptide reads, in one-letter code: Co-chaperonin GroES (95 aa).

It belongs to the GroES chaperonin family. Heptamer of 7 subunits arranged in a ring. Interacts with the chaperonin GroEL.

It is found in the cytoplasm. Its function is as follows. Together with the chaperonin GroEL, plays an essential role in assisting protein folding. The GroEL-GroES system forms a nano-cage that allows encapsulation of the non-native substrate proteins and provides a physical environment optimized to promote and accelerate protein folding. GroES binds to the apical surface of the GroEL ring, thereby capping the opening of the GroEL channel. In Rickettsia akari (strain Hartford), this protein is Co-chaperonin GroES.